Here is a 190-residue protein sequence, read N- to C-terminus: Xanthine phosphoribosyltransferase (190 aa).

Positions 20 and 27 each coordinate xanthine. 128–132 provides a ligand contact to 5-phospho-alpha-D-ribose 1-diphosphate; sequence ANGKA. Lys156 contacts xanthine.

This sequence belongs to the purine/pyrimidine phosphoribosyltransferase family. Xpt subfamily. As to quaternary structure, homodimer.

It is found in the cytoplasm. The catalysed reaction is XMP + diphosphate = xanthine + 5-phospho-alpha-D-ribose 1-diphosphate. Its pathway is purine metabolism; XMP biosynthesis via salvage pathway; XMP from xanthine: step 1/1. Its function is as follows. Converts the preformed base xanthine, a product of nucleic acid breakdown, to xanthosine 5'-monophosphate (XMP), so it can be reused for RNA or DNA synthesis. The chain is Xanthine phosphoribosyltransferase from Pseudomonas fluorescens (strain SBW25).